Here is a 159-residue protein sequence, read N- to C-terminus: uncharacterized protein (159 aa).

Residues 1-139 (MSRRAPGSRL…RKSQERSMSY (139 aa)) are disordered. Polar residues predominate over residues 9-31 (RLSSGGTNYSRSWNDWQPRTDSA). A compositionally biased stretch (basic and acidic residues) spans 65–82 (QRHDDTRVHADIQNDEKG). Positions 105–119 (RVNNVTSPEFTSVQH) are enriched in polar residues. Basic and acidic residues predominate over residues 125–134 (ATKDMRKSQE).

This is an uncharacterized protein from Homo sapiens (Human).